The sequence spans 1428 residues: DNA topoisomerase 2 (1428 aa).

Residues asparagine 70, asparagine 99, 127 to 129, and 140 to 147 contribute to the ATP site; these read SSN and GRNGYGAK. The segment at 333 to 336 is interaction with DNA; sequence KKKK. 365 to 367 provides a ligand contact to ATP; sequence QTK. In terms of domain architecture, Toprim spans 443-557; the sequence is CTLVLTEGDS…GLLDIQGFLL (115 aa). 3 residues coordinate Mg(2+): glutamate 449, aspartate 526, and aspartate 528. The Topo IIA-type catalytic domain maps to 692–1159; it reads IPNVLDGFKP…SAKDIWNTDL (468 aa). The O-(5'-phospho-DNA)-tyrosine intermediate role is filled by tyrosine 782. The interval 965 to 974 is interaction with DNA; it reads KLISPISLMN. Disordered regions lie at residues 1083–1102, 1176–1217, 1240–1288, and 1303–1428; these read KGAT…TENV, ARGG…RKGK, KAPT…ELSK, and MGST…NEED. Threonine 1086 bears the Phosphothreonine; by CK2 mark. Phosphoserine; by CK2 is present on serine 1087. The segment covering 1207–1217 has biased composition (basic residues); the sequence is KNKKSTARKGK. Position 1252 is a phosphoserine (serine 1252). Phosphothreonine; by CK2 is present on threonine 1258. Phosphoserine; by CK2 occurs at positions 1266, 1269, and 1272. The segment covering 1275-1286 has biased composition (basic and acidic residues); the sequence is DIKKEDKDEGEL. Residues 1332-1347 are compositionally biased toward basic residues; the sequence is TAVKPKLAKKPVRKQQ. 4 positions are modified to phosphoserine; by CK2: serine 1353, serine 1356, serine 1408, and serine 1423. Over residues 1403 to 1428 the composition is skewed to acidic residues; sequence ELSDDSFIEDDEEENQGSDVSFNEED.

It belongs to the type II topoisomerase family. As to quaternary structure, homodimer. The cofactor is Mg(2+). Requires Mn(2+) as cofactor. Ca(2+) serves as cofactor. In terms of processing, phosphorylation enhances the activity. Stimulates decatenation activity.

It is found in the nucleus. It carries out the reaction ATP-dependent breakage, passage and rejoining of double-stranded DNA.. Its function is as follows. Control of topological states of DNA by transient breakage and subsequent rejoining of DNA strands. Topoisomerase II makes double-strand breaks. Essential during mitosis and meiosis for proper segregation of daughter chromosomes. The chain is DNA topoisomerase 2 (TOP2) from Saccharomyces cerevisiae (strain ATCC 204508 / S288c) (Baker's yeast).